The chain runs to 269 residues: Formamidopyrimidine-DNA glycosylase (269 aa).

The active-site Schiff-base intermediate with DNA is the Pro2. Glu3 functions as the Proton donor in the catalytic mechanism. Lys57 acts as the Proton donor; for beta-elimination activity in catalysis. Residues His90, Arg109, and Arg150 each coordinate DNA. The FPG-type zinc-finger motif lies at 235–269; sequence NVYGRAGQPCVQCDAILKADRHGQRSTAYCPQCQR. Catalysis depends on Arg259, which acts as the Proton donor; for delta-elimination activity.

It belongs to the FPG family. In terms of assembly, monomer. It depends on Zn(2+) as a cofactor.

The enzyme catalyses Hydrolysis of DNA containing ring-opened 7-methylguanine residues, releasing 2,6-diamino-4-hydroxy-5-(N-methyl)formamidopyrimidine.. It catalyses the reaction 2'-deoxyribonucleotide-(2'-deoxyribose 5'-phosphate)-2'-deoxyribonucleotide-DNA = a 3'-end 2'-deoxyribonucleotide-(2,3-dehydro-2,3-deoxyribose 5'-phosphate)-DNA + a 5'-end 5'-phospho-2'-deoxyribonucleoside-DNA + H(+). Its function is as follows. Involved in base excision repair of DNA damaged by oxidation or by mutagenic agents. Acts as a DNA glycosylase that recognizes and removes damaged bases. Has a preference for oxidized purines, such as 7,8-dihydro-8-oxoguanine (8-oxoG). Has AP (apurinic/apyrimidinic) lyase activity and introduces nicks in the DNA strand. Cleaves the DNA backbone by beta-delta elimination to generate a single-strand break at the site of the removed base with both 3'- and 5'-phosphates. The chain is Formamidopyrimidine-DNA glycosylase from Alcanivorax borkumensis (strain ATCC 700651 / DSM 11573 / NCIMB 13689 / SK2).